The sequence spans 156 residues: Histidine-containing phosphotransfer protein 2 (156 aa).

An N-acetylmethionine modification is found at methionine 1. The region spanning 40 to 147 (SPDFVSEVLS…NLEKQIIQAG (108 aa)) is the HPt domain. Histidine 82 carries the post-translational modification Phosphohistidine.

Interacts with the B-type response regulators ARR1, ARR2 and ARR10. Binds to AHK1, AHK2, AHK3, AHK4, AHK5, ETR1 and CKI1. Two-component system major event consists of a His-to-Asp phosphorelay between a sensor histidine kinase (HK) and a response regulator (RR). In plants, the His-to-Asp phosphorelay involves an additional intermediate named Histidine-containing phosphotransfer protein (HPt). This multistep phosphorelay consists of a His-Asp-His-Asp sequential transfer of a phosphate group between first a His and an Asp of the HK protein, followed by the transfer to a conserved His of the HPt protein and finally the transfer to an Asp in the receiver domain of the RR protein. As to expression, strongly expressed in flowers and roots. Detected also in leaves, siliques and stems.

The protein localises to the cytoplasm. It localises to the cytosol. The protein resides in the nucleus. Functionally, functions as a two-component phosphorelay mediators between cytokinin sensor histidine kinases and response regulator (B-type ARRs). Plays an important role in propagating cytokinin signal transduction through the multistep His-to-Asp phosphorelay. The sequence is that of Histidine-containing phosphotransfer protein 2 (AHP2) from Arabidopsis thaliana (Mouse-ear cress).